The primary structure comprises 231 residues: Potassium/proton antiporter CemA (231 aa).

Transmembrane regions (helical) follow at residues 7 to 27 (FISLLYLASIVFLPWWISLSF), 116 to 136 (IISFVILSVFSILSNEELIFL), 156 to 176 (ILLLTDLCIGFHSPHGWELMI), and 191 to 211 (IISGVVSTFPVILDTIFKYWI).

It belongs to the CemA family.

It is found in the plastid. It localises to the chloroplast inner membrane. The catalysed reaction is K(+)(in) + H(+)(out) = K(+)(out) + H(+)(in). In terms of biological role, contributes to K(+)/H(+) antiport activity by supporting proton efflux to control proton extrusion and homeostasis in chloroplasts in a light-dependent manner to modulate photosynthesis. Prevents excessive induction of non-photochemical quenching (NPQ) under continuous-light conditions. Indirectly promotes efficient inorganic carbon uptake into chloroplasts. This is Potassium/proton antiporter CemA from Morus indica (Mulberry).